The chain runs to 37 residues: MDEDDWDDYDYGTYECGCCTCCGCTCYYDEWDEEDDL.

The polypeptide is Gene 40 protein (40) (Mycobacterium phage L5 (Mycobacteriophage L5)).